Consider the following 500-residue polypeptide: Probable malate:quinone oxidoreductase (500 aa).

This sequence belongs to the MQO family. FAD is required as a cofactor.

It catalyses the reaction (S)-malate + a quinone = a quinol + oxaloacetate. It functions in the pathway carbohydrate metabolism; tricarboxylic acid cycle; oxaloacetate from (S)-malate (quinone route): step 1/1. In Bacillus thuringiensis (strain Al Hakam), this protein is Probable malate:quinone oxidoreductase.